Consider the following 510-residue polypeptide: Scarecrow-like protein 29 (510 aa).

A disordered region spans residues 90-142 (LDLPPEIQQPNDQSRKRSHDGFLEAQQVKKSARSKRKAIKSSEKSSKDGNKEG). Over residues 102-111 (QSRKRSHDGF) the composition is skewed to basic and acidic residues. The span at 119–128 (KSARSKRKAI) shows a compositional bias: basic residues. Basic and acidic residues predominate over residues 129 to 142 (KSSEKSSKDGNKEG). Residues 136-510 (KDGNKEGRWA…EAVSFCSLWK (375 aa)) form the GRAS domain. A leucine repeat I (LRI) region spans residues 143-205 (RWAEKLLNPC…HLSSSSVSSS (63 aa)). Residues 224–294 (LLKFYEVSPW…GPPPRVRITV (71 aa)) are VHIID. Positions 259 to 263 (LHIID) match the VHIID motif. Positions 312–337 (NYGSQLLGFARSLKINLQISVLDKLQ) are leucine repeat II (LRII). Residues 347–435 (LIVCAQFRLH…RKLMEGEATK (89 aa)) form a PFYRE region. An SAW region spans residues 438–510 (MNAGDMNEGK…EAVSFCSLWK (73 aa)).

The protein belongs to the GRAS family. Expressed in seedlings, roots and flowers.

It localises to the nucleus. Functionally, probable transcription factor involved in plant development. This Arabidopsis thaliana (Mouse-ear cress) protein is Scarecrow-like protein 29 (SCL29).